The primary structure comprises 89 residues: Toxin To14 (89 aa).

The first 19 residues, 1 to 19 (MNCLMLIFVVFLLAFGVEC), serve as a signal peptide directing secretion. An LCN-type CS-alpha/beta domain is found at 21 to 85 (KDDYPVDTAK…SPTKTSGRCN (65 aa)). 4 disulfide bridges follow: Cys33-Cys84, Cys37-Cys60, Cys46-Cys67, and Cys50-Cys69.

Expressed by the venom gland.

The protein resides in the secreted. Functionally, inhibits voltage-gated sodium channels (Nav). This Tityus obscurus (Amazonian scorpion) protein is Toxin To14.